The sequence spans 528 residues: Protein MGF 505-7R (528 aa).

ANK repeat units follow at residues 129–158, 261–290, and 292–322; these read ECDLSCLLQHAVKYNMLSILVKYKEDLLNV, HVNRALSYAVTQNKRKILDHVVRQKNVPHK, and IERMLHLAVKKHAPRKTLNLLLSYINYKVKN.

This sequence belongs to the asfivirus MGF 505 family. Interacts with host STING1. Interacts with host JAK1; this interaction leads to JAK1 degradation. Interacts with host JAK2; this interaction leads to JAK2 degradation. Interacts with host RELA; this interaction inhibits NF-kappa-B promoter activity.

It is found in the host cytoplasm. Plays a role in virus cell tropism, and may be required for efficient virus replication in macrophages. Interferes with host NF-kappa-B promoter activity mediated by TLR8. Mechanistically, inhibits the phosphorylation and subsequent nuclear translocation of host NF-kappa-B RELA subunit downstream of TLR8. Promotes the expression of the autophagy-related protein host ULK1 to degrade host STING and inhibit the interferon response. Also inhibits JAK1- and JAK2-mediated signaling and thus negatively regulates the IFN-gamma signaling. The protein is Protein MGF 505-7R of Ornithodoros (relapsing fever ticks).